The primary structure comprises 141 residues: MYKHVLVAVDLSDESQFLLEKAAGVARRNEAKLSIIHVDVNFSDLYTGLIDVNMASMQDRISTETQQSLVQLAENSSYPVAEKLSGSGDLGQVLADAIEKYDVDLLVTGHHQDFWSKLMSSTRQVMNNIAVDMLVVPLRDE.

It belongs to the universal stress protein A family. In terms of assembly, homodimer.

Its subcellular location is the cytoplasm. In terms of biological role, required for resistance to DNA-damaging agents. The sequence is that of Universal stress protein A homolog (uspA) from Pasteurella multocida (strain Pm70).